A 267-amino-acid polypeptide reads, in one-letter code: Undecaprenyl-diphosphatase (267 aa).

7 helical membrane-spanning segments follow: residues 39 to 59, 87 to 107, 112 to 132, 145 to 165, 183 to 203, 216 to 236, and 244 to 264; these read PGLA…IWYF, VLYL…LNDL, FRSP…LWAV, VTLR…VPGV, PSVA…AVIV, LPLL…ISVL, and SFGV…ATLA.

Belongs to the UppP family.

The protein resides in the cell inner membrane. It catalyses the reaction di-trans,octa-cis-undecaprenyl diphosphate + H2O = di-trans,octa-cis-undecaprenyl phosphate + phosphate + H(+). In terms of biological role, catalyzes the dephosphorylation of undecaprenyl diphosphate (UPP). Confers resistance to bacitracin. The sequence is that of Undecaprenyl-diphosphatase from Gemmatimonas aurantiaca (strain DSM 14586 / JCM 11422 / NBRC 100505 / T-27).